We begin with the raw amino-acid sequence, 278 residues long: Gasdermin-like protein het-Q1 (278 aa).

The protein belongs to the gasdermin family. In terms of assembly, homooligomer; forms a homooligomeric ring-shaped pore complex when inserted in the membrane. In terms of processing, the precursor form is cleaved by het-Q2, generating the pore-forming protein (Gasdermin-like protein het-Q1, N-terminal).

The protein localises to the cell membrane. Functionally, gasdermin-like protein involved in heterokaryon incompatibility, a process that ensures that during spontaneous vegetative cell fusion, only compatible cells from the same colony survive (non-self-recognition). In P.anserina, the het-q locus exists as 2 incompatible alleles, het-Q1 (this entry) and het-Q2 (AC P0DW09). This form constitutes the precursor of the pore-forming protein: during the allorecognition process, it is cleaved by het-Q2, releasing the N-terminal moiety (Gasdermin-like protein het-Q1, N-terminal) that binds to membranes and forms pores, triggering cell death. Its function is as follows. Pore-forming protein that causes membrane permeabilization and cell death. Released upon cleavage and maturation by het-Q2 and binds to membrane inner leaflet lipids. Homooligomerizes within the membrane and forms pores of 10-15 nanometers (nm) of inner diameter, triggering cell death. The polypeptide is Gasdermin-like protein het-Q1 (Podospora anserina (strain S / ATCC MYA-4624 / DSM 980 / FGSC 10383) (Pleurage anserina)).